Reading from the N-terminus, the 299-residue chain is Bifunctional protein FolD (299 aa).

NADP(+)-binding positions include Gly-166–Ser-168, Ser-191, and Ile-232.

The protein belongs to the tetrahydrofolate dehydrogenase/cyclohydrolase family. As to quaternary structure, homodimer.

It catalyses the reaction (6R)-5,10-methylene-5,6,7,8-tetrahydrofolate + NADP(+) = (6R)-5,10-methenyltetrahydrofolate + NADPH. The catalysed reaction is (6R)-5,10-methenyltetrahydrofolate + H2O = (6R)-10-formyltetrahydrofolate + H(+). Its pathway is one-carbon metabolism; tetrahydrofolate interconversion. In terms of biological role, catalyzes the oxidation of 5,10-methylenetetrahydrofolate to 5,10-methenyltetrahydrofolate and then the hydrolysis of 5,10-methenyltetrahydrofolate to 10-formyltetrahydrofolate. The protein is Bifunctional protein FolD of Anaplasma marginale (strain St. Maries).